A 179-amino-acid chain; its full sequence is Large ribosomal subunit protein uL5 (179 aa).

The protein belongs to the universal ribosomal protein uL5 family. Part of the 50S ribosomal subunit; part of the 5S rRNA/L5/L18/L25 subcomplex. Contacts the 5S rRNA and the P site tRNA. Forms a bridge to the 30S subunit in the 70S ribosome.

Functionally, this is one of the proteins that bind and probably mediate the attachment of the 5S RNA into the large ribosomal subunit, where it forms part of the central protuberance. In the 70S ribosome it contacts protein S13 of the 30S subunit (bridge B1b), connecting the 2 subunits; this bridge is implicated in subunit movement. Contacts the P site tRNA; the 5S rRNA and some of its associated proteins might help stabilize positioning of ribosome-bound tRNAs. The chain is Large ribosomal subunit protein uL5 from Dehalococcoides mccartyi (strain ATCC BAA-2100 / JCM 16839 / KCTC 5957 / BAV1).